The following is a 160-amino-acid chain: 2-C-methyl-D-erythritol 2,4-cyclodiphosphate synthase (160 aa).

Residues aspartate 11 and histidine 13 each contribute to the a divalent metal cation site. Residues 11–13 and 37–38 contribute to the 4-CDP-2-C-methyl-D-erythritol 2-phosphate site; these read DIH and HS. Histidine 45 serves as a coordination point for a divalent metal cation. Residues 59-61, 135-138, and arginine 145 each bind 4-CDP-2-C-methyl-D-erythritol 2-phosphate; these read DIG and TTNE.

This sequence belongs to the IspF family. In terms of assembly, homotrimer. A divalent metal cation is required as a cofactor.

The enzyme catalyses 4-CDP-2-C-methyl-D-erythritol 2-phosphate = 2-C-methyl-D-erythritol 2,4-cyclic diphosphate + CMP. It functions in the pathway isoprenoid biosynthesis; isopentenyl diphosphate biosynthesis via DXP pathway; isopentenyl diphosphate from 1-deoxy-D-xylulose 5-phosphate: step 4/6. Its function is as follows. Involved in the biosynthesis of isopentenyl diphosphate (IPP) and dimethylallyl diphosphate (DMAPP), two major building blocks of isoprenoid compounds. Catalyzes the conversion of 4-diphosphocytidyl-2-C-methyl-D-erythritol 2-phosphate (CDP-ME2P) to 2-C-methyl-D-erythritol 2,4-cyclodiphosphate (ME-CPP) with a corresponding release of cytidine 5-monophosphate (CMP). This Synechococcus elongatus (strain ATCC 33912 / PCC 7942 / FACHB-805) (Anacystis nidulans R2) protein is 2-C-methyl-D-erythritol 2,4-cyclodiphosphate synthase.